The chain runs to 200 residues: ATP-dependent Clp protease proteolytic subunit 2 (200 aa).

S101 serves as the catalytic Nucleophile. H126 is a catalytic residue.

Belongs to the peptidase S14 family. Fourteen ClpP subunits assemble into 2 heptameric rings which stack back to back to give a disk-like structure with a central cavity, resembling the structure of eukaryotic proteasomes.

It localises to the cytoplasm. It catalyses the reaction Hydrolysis of proteins to small peptides in the presence of ATP and magnesium. alpha-casein is the usual test substrate. In the absence of ATP, only oligopeptides shorter than five residues are hydrolyzed (such as succinyl-Leu-Tyr-|-NHMec, and Leu-Tyr-Leu-|-Tyr-Trp, in which cleavage of the -Tyr-|-Leu- and -Tyr-|-Trp bonds also occurs).. Cleaves peptides in various proteins in a process that requires ATP hydrolysis. Has a chymotrypsin-like activity. Plays a major role in the degradation of misfolded proteins. The chain is ATP-dependent Clp protease proteolytic subunit 2 from Prochlorococcus marinus (strain NATL2A).